Here is a 219-residue protein sequence, read N- to C-terminus: Ras-related protein Rab-3B (219 aa).

Residue A2 is modified to N-acetylalanine. GTP contacts are provided by S31, S32, V33, G34, K35, T36, S37, P49, and S53. Residue T36 coordinates Mg(2+). The Switch 1 signature appears at 45 to 58; that stretch reads DTFTPAFVSTVGID. Residues T54 and D77 each coordinate Mg(2+). A Switch 2 motif is present at residues 78–96; it reads TAGQERYRTITTAYYRGAM. G80 provides a ligand contact to GTP. The residue at position 86 (T86) is a Phosphothreonine. GTP-binding residues include N135, K136, D138, A166, and K167. S188 is subject to Phosphoserine. S-geranylgeranyl cysteine attachment occurs at residues C217 and C219. A Cysteine methyl ester modification is found at C219.

It belongs to the small GTPase superfamily. Rab family. Interacts with RIMS1, RIMS2, RPH3A and RPH3AL. The GTP-bound form interacts with GAS8/DRC4 (via coiled-coil domains). Interacts with GDI2, CHM and CHML; phosphorylation at Thr-86 disrupts these interactions. Interacts with MADD (via uDENN domain); the GTP-bound form is preferred for interaction. Mg(2+) is required as a cofactor. Post-translationally, phosphorylation of Thr-86 in the switch II region by LRRK2 prevents the association of RAB regulatory proteins, including CHM, CHML and RAB GDP dissociation inhibitor GDI2.

Its subcellular location is the cell membrane. It localises to the golgi apparatus. It carries out the reaction GTP + H2O = GDP + phosphate + H(+). With respect to regulation, regulated by guanine nucleotide exchange factors (GEFs) which promote the exchange of bound GDP for free GTP. Regulated by GTPase activating proteins (GAPs) which increase the GTP hydrolysis activity. Inhibited by GDP dissociation inhibitors (GDIs) which prevent Rab-GDP dissociation. Functionally, the small GTPases Rab are key regulators of intracellular membrane trafficking, from the formation of transport vesicles to their fusion with membranes. Rabs cycle between an inactive GDP-bound form and an active GTP-bound form that is able to recruit to membranes different sets of downstream effectors directly responsible for vesicle formation, movement, tethering and fusion. The chain is Ras-related protein Rab-3B (RAB3B) from Bos taurus (Bovine).